The sequence spans 86 residues: Large ribosomal subunit protein bL27 (86 aa).

The segment at 1–21 is disordered; that stretch reads MAHKKAAGSSRNGRDSESKRL.

This sequence belongs to the bacterial ribosomal protein bL27 family.

The polypeptide is Large ribosomal subunit protein bL27 (Hahella chejuensis (strain KCTC 2396)).